The primary structure comprises 901 residues: Valine--tRNA ligase (901 aa).

Residues 536 to 540 carry the 'KMSKS' region motif; sequence KLSKS. Lys-539 is a binding site for ATP. Residues 831-901 adopt a coiled-coil conformation; sequence LEGLISFEKE…KLQGNLEVLS (71 aa).

Belongs to the class-I aminoacyl-tRNA synthetase family. ValS type 1 subfamily. As to quaternary structure, monomer.

The protein localises to the cytoplasm. It catalyses the reaction tRNA(Val) + L-valine + ATP = L-valyl-tRNA(Val) + AMP + diphosphate. Catalyzes the attachment of valine to tRNA(Val). As ValRS can inadvertently accommodate and process structurally similar amino acids such as threonine, to avoid such errors, it has a 'posttransfer' editing activity that hydrolyzes mischarged Thr-tRNA(Val) in a tRNA-dependent manner. This is Valine--tRNA ligase from Chlorobaculum tepidum (strain ATCC 49652 / DSM 12025 / NBRC 103806 / TLS) (Chlorobium tepidum).